A 129-amino-acid polypeptide reads, in one-letter code: 3-oxo-4,17-pregnadiene-20-carboxyl-CoA hydratase beta subunit (129 aa).

It belongs to the thioester dehydratase family. Heterodimer composed of ChsH1 and ChsH2. Two heterodimers combine to form a heterotetramer. The complex interacts with Ltp2 via the DUF35 C-terminal region of ChsH2. The ChsH1-ChsH2-Ltp2 protein complex is composed of two protomers that form a heterohexameric structure through the Ltp2 dimerization interface.

The enzyme catalyses 3-oxochola-4,17-dien-22-oyl-CoA + H2O = 17-hydroxy-3-oxochol-4-en-22-oyl-CoA. The catalysed reaction is (2E)-octenoyl-CoA + H2O = 3-hydroxyoctanoyl-CoA. It carries out the reaction (2E)-decenoyl-CoA + H2O = 3-hydroxydecanoyl-CoA. Its pathway is steroid metabolism; cholesterol degradation. In the absence of the Ltp2 aldolase, ChsH1/ChsH2 can hydrate only about 30% of the 3-OPDC-CoA substrate. Complete turnover requires the presence of Ltp2. In terms of biological role, involved in cholesterol side chain degradation. Catalyzes the hydration of 3-oxo-4,17-pregnadiene-20-carboxyl-CoA (3-OPDC-CoA) to form 17-hydroxy-3-oxo-4-pregnene-20-carboxyl-CoA (17-HOPC-CoA), in the modified beta-oxidation pathway for cholesterol side chain degradation. Can also use octenoyl-CoA and decenoyl-CoA, with lower efficiency. The chain is 3-oxo-4,17-pregnadiene-20-carboxyl-CoA hydratase beta subunit from Mycobacterium tuberculosis (strain ATCC 25618 / H37Rv).